The chain runs to 182 residues: ATP-dependent protease subunit HslV (182 aa).

Thr12 is a catalytic residue. Ala167, Cys170, and Thr173 together coordinate Na(+).

This sequence belongs to the peptidase T1B family. HslV subfamily. A double ring-shaped homohexamer of HslV is capped on each side by a ring-shaped HslU homohexamer. The assembly of the HslU/HslV complex is dependent on binding of ATP.

Its subcellular location is the cytoplasm. It catalyses the reaction ATP-dependent cleavage of peptide bonds with broad specificity.. Allosterically activated by HslU binding. In terms of biological role, protease subunit of a proteasome-like degradation complex believed to be a general protein degrading machinery. The protein is ATP-dependent protease subunit HslV of Chlorobium chlorochromatii (strain CaD3).